A 283-amino-acid chain; its full sequence is MSERLSITPLGPYIGAQISGADLTRPLSDNQFEQLYHAVLRHQVVFLRDQAITPQQQRALAQRFGELHIHPVYPHAEGVDEIIVLDTHNDNPPDNDNWHTDVTFIETPPAGAILAAKELPSTGGDTLWTSGIAAYEALSVPFRQLLSGLRAEHDFRKSFPEYKYRKTEEEHQRWREAVAKNPPLLHPVVRTHPVSGKQALFVNEGFTTRIVDVSEKESEALLSFLFAHITKPEFQVRWRWQPNDIAIWDNRVTQHYANADYLPQRRIMHRATILGDKPFYRAG.

The taurine site is built by His70, Tyr73, and Asn95. Fe cation-binding residues include His99 and Asp101. Residue Val102 participates in taurine binding. Position 126 (Thr126) interacts with 2-oxoglutarate. Residues Trp128, Trp240, and Trp248 each carry the 3-hydroxytryptophan; by autocatalysis modification. Position 255 (His255) interacts with Fe cation. 2-oxoglutarate-binding residues include His255, Arg266, and Arg270. Residue Arg270 participates in taurine binding.

The protein belongs to the TfdA dioxygenase family. As to quaternary structure, homodimer. Was later shown to be a homotetramer arranged as a dimer of two dimers. The cofactor is Fe(2+).

The catalysed reaction is taurine + 2-oxoglutarate + O2 = aminoacetaldehyde + sulfite + succinate + CO2 + H(+). It functions in the pathway organosulfur degradation; taurine degradation via aerobic pathway; aminoacetaldehyde and sulfite from taurine: step 1/1. Its activity is regulated as follows. Activated by ascorbate and inhibited by divalent metal ions such as zinc, copper and cobalt. Functionally, catalyzes the alpha-ketoglutarate-dependent hydroxylation of taurine yielding sulfite and aminoacetaldehyde after decomposition of an unstable intermediate. Is required for the utilization of taurine (2-aminoethanesulfonate) as an alternative sulfur source for growth in the absence of sulfate. To a lesser extent, pentanesulfonate, 3-(N-morpholino)propanesulfonate and 1,3-dioxo-2-isoindolineethanesulfonate are also desulfonated by this enzyme in vitro; however, desulfonation by TauD of organosulfonates other than taurine seem to be of little or no importance for sulfur metabolism in vivo. This Escherichia coli (strain K12) protein is Alpha-ketoglutarate-dependent taurine dioxygenase (tauD).